Consider the following 449-residue polypeptide: MKGLFIRTYGCQMNVYDSERIRDVLRPLGYAPVETPESADLVVVNTCHIREKATEKVYSELGQLKRMKEASGGRMTIAVAGCVAQAEGEELIRRQPAVDLVLGPQAYHKLPEMIARASRAIGDRLETEFDTVEKFDALPKTREADGPAAFVSVQEGCDKFCTFCVVPYTRGAEMSRRVDDIVFETRSLASQGVREITLLGQNVNAFHGPAPVLEGGEDWTLGQLCRHLSKIGGIERIRYTTSHPRDMDDDLIAAHGDTPAMMPFLHLPVQSGSDRILKAMNRGHTADHYRDIITRVRAARPDIAIASDFIVGFPGESDADFEATMQLVRDIGYAIAYSFKYSSRPGTPAAEMHGHLSESVKDARLQALQALLREQQTEFNASQIGKTLPVLVTGKGRNAGQMHGRSPYLQAVHFEGPDDLNGKIVDVKVIGASLNSLTGELVRVAEAAL.

One can recognise an MTTase N-terminal domain in the interval 2-119; the sequence is KGLFIRTYGC…LPEMIARASR (118 aa). Positions 11, 47, 82, 157, 161, and 164 each coordinate [4Fe-4S] cluster. One can recognise a Radical SAM core domain in the interval 143–378; the sequence is EADGPAAFVS…QALLREQQTE (236 aa). Positions 381-443 constitute a TRAM domain; sequence ASQIGKTLPV…LNSLTGELVR (63 aa).

This sequence belongs to the methylthiotransferase family. MiaB subfamily. Monomer. [4Fe-4S] cluster is required as a cofactor.

It localises to the cytoplasm. The catalysed reaction is N(6)-dimethylallyladenosine(37) in tRNA + (sulfur carrier)-SH + AH2 + 2 S-adenosyl-L-methionine = 2-methylsulfanyl-N(6)-dimethylallyladenosine(37) in tRNA + (sulfur carrier)-H + 5'-deoxyadenosine + L-methionine + A + S-adenosyl-L-homocysteine + 2 H(+). In terms of biological role, catalyzes the methylthiolation of N6-(dimethylallyl)adenosine (i(6)A), leading to the formation of 2-methylthio-N6-(dimethylallyl)adenosine (ms(2)i(6)A) at position 37 in tRNAs that read codons beginning with uridine. This Hyphomonas neptunium (strain ATCC 15444) protein is tRNA-2-methylthio-N(6)-dimethylallyladenosine synthase.